The sequence spans 696 residues: DNA-directed RNA polymerase subunit beta' (696 aa).

Zn(2+) contacts are provided by Cys-69, Cys-71, Cys-87, and Cys-90. 3 residues coordinate Mg(2+): Asp-504, Asp-506, and Asp-508.

Belongs to the RNA polymerase beta' chain family. RpoC1 subfamily. In plastids the minimal PEP RNA polymerase catalytic core is composed of four subunits: alpha, beta, beta', and beta''. When a (nuclear-encoded) sigma factor is associated with the core the holoenzyme is formed, which can initiate transcription. Requires Mg(2+) as cofactor. Zn(2+) serves as cofactor.

The protein resides in the plastid. The protein localises to the chloroplast. The catalysed reaction is RNA(n) + a ribonucleoside 5'-triphosphate = RNA(n+1) + diphosphate. DNA-dependent RNA polymerase catalyzes the transcription of DNA into RNA using the four ribonucleoside triphosphates as substrates. The polypeptide is DNA-directed RNA polymerase subunit beta' (Pinus thunbergii (Japanese black pine)).